Here is a 364-residue protein sequence, read N- to C-terminus: UDP-N-acetylenolpyruvoylglucosamine reductase (364 aa).

Residues 30–196 (LGGPATRLIT…LRVRFELEDA (167 aa)) form the FAD-binding PCMH-type domain. Residue Arg-173 is part of the active site. Residue Ser-252 is the Proton donor of the active site. The active site involves Glu-356.

It belongs to the MurB family. FAD serves as cofactor.

It is found in the cytoplasm. It carries out the reaction UDP-N-acetyl-alpha-D-muramate + NADP(+) = UDP-N-acetyl-3-O-(1-carboxyvinyl)-alpha-D-glucosamine + NADPH + H(+). It participates in cell wall biogenesis; peptidoglycan biosynthesis. Its function is as follows. Cell wall formation. In Streptomyces avermitilis (strain ATCC 31267 / DSM 46492 / JCM 5070 / NBRC 14893 / NCIMB 12804 / NRRL 8165 / MA-4680), this protein is UDP-N-acetylenolpyruvoylglucosamine reductase.